A 339-amino-acid polypeptide reads, in one-letter code: Ribosomal RNA small subunit methyltransferase H (339 aa).

S-adenosyl-L-methionine is bound by residues 56–58 (GGH), D76, F102, D123, and Q130. 2 disordered regions span residues 274-309 (RHSR…KAEV) and 320-339 (LRVA…PQHS). Positions 325–339 (RTDTPYNTDPSPQHS) are enriched in polar residues.

The protein belongs to the methyltransferase superfamily. RsmH family.

The protein localises to the cytoplasm. It carries out the reaction cytidine(1402) in 16S rRNA + S-adenosyl-L-methionine = N(4)-methylcytidine(1402) in 16S rRNA + S-adenosyl-L-homocysteine + H(+). In terms of biological role, specifically methylates the N4 position of cytidine in position 1402 (C1402) of 16S rRNA. The polypeptide is Ribosomal RNA small subunit methyltransferase H (Psychrobacter sp. (strain PRwf-1)).